A 336-amino-acid polypeptide reads, in one-letter code: Dihydroorotate dehydrogenase (quinone) (336 aa).

FMN-binding positions include 62 to 66 and Thr-86; that span reads AGLDK. Lys-66 serves as a coordination point for substrate. 111–115 is a substrate binding site; it reads NRMGF. Residues Asn-139 and Asn-172 each contribute to the FMN site. Asn-172 provides a ligand contact to substrate. Ser-175 serves as the catalytic Nucleophile. Position 177 (Asn-177) interacts with substrate. Lys-217 and Thr-245 together coordinate FMN. 246–247 contributes to the substrate binding site; that stretch reads NT. FMN contacts are provided by residues Gly-268, Gly-297, and 318-319; that span reads YS.

It belongs to the dihydroorotate dehydrogenase family. Type 2 subfamily. As to quaternary structure, monomer. It depends on FMN as a cofactor.

The protein resides in the cell membrane. It carries out the reaction (S)-dihydroorotate + a quinone = orotate + a quinol. The protein operates within pyrimidine metabolism; UMP biosynthesis via de novo pathway; orotate from (S)-dihydroorotate (quinone route): step 1/1. Its function is as follows. Catalyzes the conversion of dihydroorotate to orotate with quinone as electron acceptor. The polypeptide is Dihydroorotate dehydrogenase (quinone) (Escherichia coli (strain UTI89 / UPEC)).